We begin with the raw amino-acid sequence, 1496 residues long: Chromosome partition protein MukB (1496 aa).

63–70 (GGNGAGKS) provides a ligand contact to ATP. Coiled-coil stretches lie at residues 328–493 (KLEL…QRLS), 536–632 (KMQA…APAW), 808–832 (RAAR…HAER), 861–1171 (NPEE…SAEE), and 1235–1291 (IDAI…LQNI). Residues 694–811 (PDGSDDVRLN…EVPLFGRAAR (118 aa)) are flexible hinge. Residues 1082 to 1091 (RARSRRDELQ) show a composition bias toward basic and acidic residues. The segment at 1082 to 1101 (RARSRRDELQQRLSQQRSRK) is disordered.

It belongs to the SMC family. MukB subfamily. Homodimerization via its hinge domain. Binds to DNA via its C-terminal region. Interacts, and probably forms a ternary complex, with MukE and MukF via its C-terminal region. The complex formation is stimulated by calcium or magnesium. Interacts with tubulin-related protein FtsZ.

It localises to the cytoplasm. The protein localises to the nucleoid. Functionally, plays a central role in chromosome condensation, segregation and cell cycle progression. Functions as a homodimer, which is essential for chromosome partition. Involved in negative DNA supercoiling in vivo, and by this means organize and compact chromosomes. May achieve or facilitate chromosome segregation by condensation DNA from both sides of a centrally located replisome during cell division. This Actinobacillus pleuropneumoniae serotype 5b (strain L20) protein is Chromosome partition protein MukB.